The following is a 392-amino-acid chain: Succinyl-diaminopimelate desuccinylase (392 aa).

His77 contributes to the Zn(2+) binding site. The active site involves Asp79. Asp110 is a binding site for Zn(2+). Glu144 acts as the Proton acceptor in catalysis. Residues Glu145, Glu173, and His359 each coordinate Zn(2+).

This sequence belongs to the peptidase M20A family. DapE subfamily. As to quaternary structure, homodimer. Zn(2+) is required as a cofactor. Requires Co(2+) as cofactor.

It catalyses the reaction N-succinyl-(2S,6S)-2,6-diaminopimelate + H2O = (2S,6S)-2,6-diaminopimelate + succinate. The protein operates within amino-acid biosynthesis; L-lysine biosynthesis via DAP pathway; LL-2,6-diaminopimelate from (S)-tetrahydrodipicolinate (succinylase route): step 3/3. Its function is as follows. Catalyzes the hydrolysis of N-succinyl-L,L-diaminopimelic acid (SDAP), forming succinate and LL-2,6-diaminopimelate (DAP), an intermediate involved in the bacterial biosynthesis of lysine and meso-diaminopimelic acid, an essential component of bacterial cell walls. This is Succinyl-diaminopimelate desuccinylase from Thiobacillus denitrificans (strain ATCC 25259 / T1).